The primary structure comprises 169 residues: Transcription regulatory protein SNF11 (169 aa).

The disordered stretch occupies residues 1-24; the sequence is MSSEIAYSNTNTNTENENRNTGAG. Serine 2 bears the N-acetylserine mark. Over residues 9–21 the composition is skewed to low complexity; sequence NTNTNTENENRNT. 8 consecutive repeat copies span residues 28–31, 32–35, 36–39, 40–43, 44–47, 48–51, 76–80, and 160–165. Residues 28 to 51 are 6 X 4 AA tandem repeats of N-[AT]-[NT]-A; that stretch reads NTNANANANATANATANATANATA. The 2 X 5 AA repeats of L-L-A-R-V stretch occupies residues 76 to 165; that stretch reads LLARVIQMNN…SKLYLLLARV (90 aa).

Component of the SWI/SNF global transcription activator complex. The 1.14 MDa SWI/SNF complex is composed of 11 different subunits: one copy each of SWI1, SNF2/SWI2, SNF5, SNF12/SWP73, ARP7/SWP61, ARP9/SWP59; two copies each of SWI3, SNF6, SNF11, SWP82; and three copies of TAF14/SWP29.

Its subcellular location is the nucleus. In terms of biological role, involved in transcriptional activation. Component of the SWI/SNF complex, an ATP-dependent chromatin remodeling complex, which is required for the positive and negative regulation of gene expression of a large number of genes. It changes chromatin structure by altering DNA-histone contacts within a nucleosome, leading eventually to a change in nucleosome position, thus facilitating or repressing binding of gene-specific transcription factors. This is Transcription regulatory protein SNF11 (SNF11) from Saccharomyces cerevisiae (strain ATCC 204508 / S288c) (Baker's yeast).